Reading from the N-terminus, the 428-residue chain is MFVDQVKIYVKGGDGGNGMVAYRREKYVPKGGPAGGDGGKGADVVFVVEEGLRTLMDFRYQRHFKADRGQHGMSKGQHGRKSEDLLVKVPPGTVVKDEKTGQILADLVTHGQTAVIAKGGRGGRGNSRFATATNPAPEIAENGEPGQERDVILELKVLADVGLVGFPSVGKSTLLSVVSSARPKIAEYHFTTIVPNLGVVETGDNRSFVMADLPGLIEGAHAGVGLGHQFLRHIERTRVIVHVIDMSGLEGRDPYEDYVTINNELKEYNLRLTERPQVVVANKMDMPDAEENLQAFKEKVGDEVKIFPISAVTRQGVRDLLFEVANLIETTPEFPIHEVADESDTSVMYKFDTEGVKFEITRESDGTFVISGYDIEKTFKMTDFSRDESVRRFARQMRGMGIDEALRARGAKDGDIVKILEYEFEFID.

An Obg domain is found at 1 to 158 (MFVDQVKIYV…RDVILELKVL (158 aa)). Positions 159–329 (ADVGLVGFPS…LLFEVANLIE (171 aa)) constitute an OBG-type G domain. GTP-binding positions include 165–172 (GFPSVGKS), 190–194 (FTTIV), 212–215 (DLPG), 282–285 (NKMD), and 310–312 (SAV). Ser172 and Thr192 together coordinate Mg(2+). Residues 350–428 (KFDTEGVKFE…ILEYEFEFID (79 aa)) form the OCT domain.

This sequence belongs to the TRAFAC class OBG-HflX-like GTPase superfamily. OBG GTPase family. As to quaternary structure, monomer. It depends on Mg(2+) as a cofactor.

The protein localises to the cytoplasm. Its function is as follows. An essential GTPase which binds GTP, GDP and possibly (p)ppGpp with moderate affinity, with high nucleotide exchange rates and a fairly low GTP hydrolysis rate. Plays a role in control of the cell cycle, stress response, ribosome biogenesis and in those bacteria that undergo differentiation, in morphogenesis control. The sequence is that of GTPase Obg from Bacillus cereus (strain ATCC 14579 / DSM 31 / CCUG 7414 / JCM 2152 / NBRC 15305 / NCIMB 9373 / NCTC 2599 / NRRL B-3711).